Here is an 816-residue protein sequence, read N- to C-terminus: Pentatricopeptide repeat-containing protein At5g12100, mitochondrial (816 aa).

Residues 1 to 39 constitute a mitochondrion transit peptide; it reads MVTRLRLVSRSSRYATVKFTDSVSACSCRRLFSASTDPE. Residues 34–57 form a disordered region; that stretch reads ASTDPEPESQPEQAPPTNPVTGDE. PPR repeat units lie at residues 108 to 142, 143 to 177, 178 to 212, 213 to 247, 248 to 282, 283 to 317, 318 to 352, 353 to 387, 388 to 422, 423 to 457, 458 to 492, 493 to 527, 528 to 562, 563 to 597, 598 to 632, 633 to 662, 664 to 698, 699 to 733, 734 to 768, and 769 to 803; these read HDFS…GIYP, SSDS…DFRP, SKFM…RIYP, SVFI…RLLP, SLIT…HIEP, SLIT…GFVP, DAFT…GVKM, NAYT…GLVP, NEVI…GMKP, DHLA…GVSP, SVET…GTMP, NVVS…GVSP, KVRI…GIEL, NLVT…GLKP, DVFT…GIKP, TLKT…MSLK, DLLV…SIGL, DKTT…EMEP, EADT…GFLL, and DVCI…MLGD.

The protein belongs to the PPR family. P subfamily.

The protein localises to the mitochondrion. The sequence is that of Pentatricopeptide repeat-containing protein At5g12100, mitochondrial from Arabidopsis thaliana (Mouse-ear cress).